A 373-amino-acid polypeptide reads, in one-letter code: Queuine tRNA-ribosyltransferase (373 aa).

D90 serves as the catalytic Proton acceptor. Substrate is bound by residues 90 to 94 (DSGGF), D144, Q193, and G220. The interval 251 to 257 (GVGTPED) is RNA binding. D270 acts as the Nucleophile in catalysis. Residues 275 to 279 (TRNAR) are RNA binding; important for wobble base 34 recognition. Zn(2+)-binding residues include C308, C310, C313, and H339.

The protein belongs to the queuine tRNA-ribosyltransferase family. In terms of assembly, homodimer. Within each dimer, one monomer is responsible for RNA recognition and catalysis, while the other monomer binds to the replacement base PreQ1. The cofactor is Zn(2+).

The enzyme catalyses 7-aminomethyl-7-carbaguanine + guanosine(34) in tRNA = 7-aminomethyl-7-carbaguanosine(34) in tRNA + guanine. It participates in tRNA modification; tRNA-queuosine biosynthesis. Its function is as follows. Catalyzes the base-exchange of a guanine (G) residue with the queuine precursor 7-aminomethyl-7-deazaguanine (PreQ1) at position 34 (anticodon wobble position) in tRNAs with GU(N) anticodons (tRNA-Asp, -Asn, -His and -Tyr). Catalysis occurs through a double-displacement mechanism. The nucleophile active site attacks the C1' of nucleotide 34 to detach the guanine base from the RNA, forming a covalent enzyme-RNA intermediate. The proton acceptor active site deprotonates the incoming PreQ1, allowing a nucleophilic attack on the C1' of the ribose to form the product. After dissociation, two additional enzymatic reactions on the tRNA convert PreQ1 to queuine (Q), resulting in the hypermodified nucleoside queuosine (7-(((4,5-cis-dihydroxy-2-cyclopenten-1-yl)amino)methyl)-7-deazaguanosine). This chain is Queuine tRNA-ribosyltransferase, found in Campylobacter jejuni (strain RM1221).